The following is a 197-amino-acid chain: Presequence translocated-associated motor subunit PAM17, mitochondrial (197 aa).

The N-terminal 14 residues, 1–14 (MFTSAIRLSSQRLF), are a transit peptide targeting the mitochondrion. Transmembrane regions (helical) follow at residues 64–84 (INVG…WAYL) and 103–123 (VISA…PIVG).

It belongs to the PAM17 family. Component of the PAM complex, at least composed of mtHsp70, MGE1, TIM44, PAM16, PAM17 and PAM18/TIM14.

Its subcellular location is the mitochondrion inner membrane. Component of the PAM complex, a complex required for the translocation of transit peptide-containing proteins from the inner membrane into the mitochondrial matrix in an ATP-dependent manner. In the complex, it is required to organize PAM16-PAM18 (TIM16-TIM14) heterodimer. This Saccharomyces cerevisiae (strain ATCC 204508 / S288c) (Baker's yeast) protein is Presequence translocated-associated motor subunit PAM17, mitochondrial (PAM17).